Consider the following 150-residue polypeptide: 3-hydroxyacyl-[acyl-carrier-protein] dehydratase FabZ (150 aa).

H54 is a catalytic residue.

The protein belongs to the thioester dehydratase family. FabZ subfamily.

It localises to the cytoplasm. The enzyme catalyses a (3R)-hydroxyacyl-[ACP] = a (2E)-enoyl-[ACP] + H2O. In terms of biological role, involved in unsaturated fatty acids biosynthesis. Catalyzes the dehydration of short chain beta-hydroxyacyl-ACPs and long chain saturated and unsaturated beta-hydroxyacyl-ACPs. In Pseudoalteromonas translucida (strain TAC 125), this protein is 3-hydroxyacyl-[acyl-carrier-protein] dehydratase FabZ.